A 203-amino-acid chain; its full sequence is Thymidine kinase (203 aa).

ATP is bound by residues Ala9–Thr16 and Asp87–Gln90. Glu88 (proton acceptor) is an active-site residue. 4 residues coordinate Zn(2+): Cys145, Cys147, Cys181, and His184.

This sequence belongs to the thymidine kinase family. In terms of assembly, homotetramer.

Its subcellular location is the cytoplasm. It carries out the reaction thymidine + ATP = dTMP + ADP + H(+). The protein is Thymidine kinase of Mesorhizobium japonicum (strain LMG 29417 / CECT 9101 / MAFF 303099) (Mesorhizobium loti (strain MAFF 303099)).